A 445-amino-acid chain; its full sequence is MLSNIVKKTIQSSKNLKSLVLNKSTSSLVYQKRFLNVHEYQAQKMMKSYGINCPVGNVAETPEEAEKIAEVMNTQDLVVKAQVLAGGRGKGIFTSGLKGGVQLCSSAEDVKKFASKMLGHTLVTKQTGEDGKVVHQVYVTERHFLRKEMYFAILMDRKAGGPVMVASPEGGVDIEGVARDNPSAIFKEPIDIMIGVQPEQTKRLAEKLGFSKKNISMAQDQMKKLYDFFIKNDCTLVEINPLAETASGDVLCMDAKLNFDDNAAFRHPDIFKLRDKSQEDPREVKAAEFDLNYIGLDGNIGCLVNGAGLAMASMDIIKLYGGSPANFLDVGGGATQKQVTEAIKLISSDKKVKSILVNIFGGIMKCDVIALGIIAALKELSIATPLVVRLQGTNVEAAKKIMEDSGLRLIAADNLDDAAQKSVRIAEIVSLAEKSDLEISFKLPL.

The N-terminal 17 residues, 1–17, are a transit peptide targeting the mitochondrion; the sequence is MLSNIVKKTIQSSKNLK. In terms of domain architecture, ATP-grasp spans 43 to 270; it reads QKMMKSYGIN…DNAAFRHPDI (228 aa). ATP contacts are provided by residues Lys-80 and 87 to 89; that span reads GRG. The Mg(2+) site is built by Asn-240 and Asp-254. Substrate-binding positions include Asn-305 and 362 to 364; that span reads GIM.

Belongs to the succinate/malate CoA ligase beta subunit family. ATP-specific subunit beta subfamily. As to quaternary structure, heterodimer of an alpha and a beta subunit. The beta subunit determines specificity for ATP. The cofactor is Mg(2+).

The protein resides in the mitochondrion. The enzyme catalyses succinate + ATP + CoA = succinyl-CoA + ADP + phosphate. It functions in the pathway carbohydrate metabolism; tricarboxylic acid cycle; succinate from succinyl-CoA (ligase route): step 1/1. In terms of biological role, ATP-specific succinyl-CoA synthetase functions in the citric acid cycle (TCA), coupling the hydrolysis of succinyl-CoA to the synthesis of ATP and thus represents the only step of substrate-level phosphorylation in the TCA. The beta subunit provides nucleotide specificity of the enzyme and binds the substrate succinate, while the binding sites for coenzyme A and phosphate are found in the alpha subunit. The protein is Succinate--CoA ligase [ADP-forming] subunit beta, mitochondrial (scsC) of Dictyostelium discoideum (Social amoeba).